A 216-amino-acid polypeptide reads, in one-letter code: NKG2-D type II integral membrane protein (216 aa).

Topologically, residues 1 to 51 (MGWIRGRRPRHNLEMSEFHNYKLGLAKSDFSTRCQKQRCPVIKSKCRENAS) are cytoplasmic. Residues 52–72 (PLFFCCFIAVAMGIRFIIMVT) form a helical; Signal-anchor for type II membrane protein membrane-spanning segment. Residues 73-216 (IWSAVFLNSL…NTYICMQRTV (144 aa)) are Extracellular-facing. Cystine bridges form between Cys96-Cys105 and Cys99-Cys110. Positions 98–213 (PCPKNWICYK…SIPNTYICMQ (116 aa)) constitute a C-type lectin domain. Asn115, Asn131, Asn163, and Asn202 each carry an N-linked (GlcNAc...) asparagine glycan. Cystine bridges form between Cys127–Cys211 and Cys189–Cys203.

As to quaternary structure, homodimer; disulfide-linked. Heterohexamer composed of two subunits of KLRK1 and four subunits of HCST/DAP10. Interacts (via transmembrane domain) with HCST/DAP10 (via transmembrane domain); the interaction is required for KLRK1 NK cell surface and induces NK cell-mediated cytotoxicity. Can form disulfide-bonded heterodimer with CD94. Interacts with CEACAM1; recruits PTPN6 that dephosphorylates VAV1. In terms of tissue distribution, natural killer cells.

The protein resides in the cell membrane. Functions as an activating and costimulatory receptor involved in immunosurveillance upon binding to various cellular stress-inducible ligands displayed at the surface of autologous tumor cells and virus-infected cells. Provides both stimulatory and costimulatory innate immune responses on activated killer (NK) cells, leading to cytotoxic activity. Acts as a costimulatory receptor for T-cell receptor (TCR) in CD8(+) T-cell-mediated adaptive immune responses by amplifying T-cell activation. Stimulates perforin-mediated elimination of ligand-expressing tumor cells. Signaling involves calcium influx, culminating in the expression of TNF-alpha. Participates in NK cell-mediated bone marrow graft rejection. May play a regulatory role in differentiation and survival of NK cells. Binds to ligands belonging to various subfamilies of MHC class I-related glycoproteins. The sequence is that of NKG2-D type II integral membrane protein (KLRK1) from Macaca fascicularis (Crab-eating macaque).